Reading from the N-terminus, the 450-residue chain is Alpha-2B adrenergic receptor (450 aa).

Residues 1-12 (MDHQDPYSVQAT) are Extracellular-facing. Residues 13–38 (AAIAAAITFLILFTIFGNALVILAVL) traverse the membrane as a helical segment. At 39 to 48 (TSRSLRAPQN) the chain is on the cytoplasmic side. The helical transmembrane segment at 49-69 (LFLVSLAAADILVATLIIPFS) threads the bilayer. Over 70–86 (LANELLGYWYFRRTWCE) the chain is Extracellular. Cys85 and Cys164 are oxidised to a cystine. A helical transmembrane segment spans residues 87-107 (VYLALDVLFCTSSIVHLCAIS). At 108 to 128 (LDRYWAVSRALEYNSKRTPRR) the chain is on the cytoplasmic side. Residues 129–149 (IKCIILTVWLIAAVISLPPLI) form a helical membrane-spanning segment. The Extracellular portion of the chain corresponds to 150 to 172 (YKGDQGPQPRGRPQCKLNQEAWY). A helical membrane pass occupies residues 173 to 193 (ILASSIGSFFAPCLIMILVYL). Residues 194 to 368 (RIYLIAKRSN…RRAQLTREKR (175 aa)) lie on the Cytoplasmic side of the membrane. 2 disordered regions span residues 204–229 (RRGPRAKGGPGQGESKQPRPDHGGAL) and 241–329 (ASAR…PLQQ). Basic and acidic residues predominate over residues 246–256 (VNGHSKSTGEK). Acidic residues predominate over residues 293 to 311 (PEDEAEEEEEEEEEEEECE). Positions 312–326 (PQAVPVSPASACSPP) are enriched in low complexity. A helical transmembrane segment spans residues 369–389 (FTFVLAVVIGVFVLCWFPFFF). Residues 390–405 (SYSLGAICPKHCKVPH) are Extracellular-facing. Residues 406–426 (GLFQFFFWIGYCNSSLNPVIY) form a helical membrane-spanning segment. The Cytoplasmic segment spans residues 427–450 (TIFNQDFRRAFRRILCRPWTQTAW). Cys442 carries S-palmitoyl cysteine lipidation.

This sequence belongs to the G-protein coupled receptor 1 family. Adrenergic receptor subfamily. ADRA2B sub-subfamily. Interacts with RAB26. Interacts with PPP1R9B. Interacts with GGA1, GGA2 and GGA3.

The protein localises to the cell membrane. Alpha-2 adrenergic receptors mediate the catecholamine-induced inhibition of adenylate cyclase through the action of G proteins. The rank order of potency for agonists of this receptor is clonidine &gt; norepinephrine &gt; epinephrine = oxymetazoline &gt; dopamine &gt; p-tyramine = phenylephrine &gt; serotonin &gt; p-synephrine / p-octopamine. For antagonists, the rank order is yohimbine &gt; chlorpromazine &gt; phentolamine &gt; mianserine &gt; spiperone &gt; prazosin &gt; alprenolol &gt; propanolol &gt; pindolol. This Homo sapiens (Human) protein is Alpha-2B adrenergic receptor (ADRA2B).